Reading from the N-terminus, the 701-residue chain is Ribosomal RNA large subunit methyltransferase K/L (701 aa).

The region spanning 43 to 154 is the THUMP domain; the sequence is LLYQSLMWSR…KETAHISLDL (112 aa).

This sequence belongs to the methyltransferase superfamily. RlmKL family.

It is found in the cytoplasm. The enzyme catalyses guanosine(2445) in 23S rRNA + S-adenosyl-L-methionine = N(2)-methylguanosine(2445) in 23S rRNA + S-adenosyl-L-homocysteine + H(+). It catalyses the reaction guanosine(2069) in 23S rRNA + S-adenosyl-L-methionine = N(2)-methylguanosine(2069) in 23S rRNA + S-adenosyl-L-homocysteine + H(+). Its function is as follows. Specifically methylates the guanine in position 2445 (m2G2445) and the guanine in position 2069 (m7G2069) of 23S rRNA. In Klebsiella pneumoniae subsp. pneumoniae (strain ATCC 700721 / MGH 78578), this protein is Ribosomal RNA large subunit methyltransferase K/L.